Consider the following 284-residue polypeptide: Pantothenate synthetase (284 aa).

30 to 37 (MGYLHEGH) serves as a coordination point for ATP. Residue His37 is the Proton donor of the active site. Gln61 lines the (R)-pantoate pocket. Residue Gln61 participates in beta-alanine binding. 147 to 150 (GQKD) serves as a coordination point for ATP. Gln153 serves as a coordination point for (R)-pantoate. ATP contacts are provided by residues Val176 and 184–187 (KSSR).

It belongs to the pantothenate synthetase family. In terms of assembly, homodimer.

Its subcellular location is the cytoplasm. It catalyses the reaction (R)-pantoate + beta-alanine + ATP = (R)-pantothenate + AMP + diphosphate + H(+). Its pathway is cofactor biosynthesis; (R)-pantothenate biosynthesis; (R)-pantothenate from (R)-pantoate and beta-alanine: step 1/1. Catalyzes the condensation of pantoate with beta-alanine in an ATP-dependent reaction via a pantoyl-adenylate intermediate. The sequence is that of Pantothenate synthetase from Lysinibacillus sphaericus (strain C3-41).